Consider the following 251-residue polypeptide: uncharacterized protein (251 aa).

Belongs to the FAM243 family.

This is an uncharacterized protein from Bos taurus (Bovine).